A 617-amino-acid chain; its full sequence is Procollagen galactosyltransferase 1 (617 aa).

The N-terminal stretch at 1–31 (MAALPRGSRGLPLLPLLLLLPPLGGPRGADG) is a signal peptide. Asn91, Asn179, and Asn376 each carry an N-linked (GlcNAc...) asparagine glycan. Basic and acidic residues predominate over residues 582–601 (DRAKSQKMREQQALSREAKN). Residues 582–617 (DRAKSQKMREQQALSREAKNSDVLQSPLDSTARDEL) form a disordered region. The Prevents secretion from ER motif lies at 614–617 (RDEL).

This sequence belongs to the glycosyltransferase 25 family. In terms of processing, N-glycosylated.

It localises to the endoplasmic reticulum lumen. It carries out the reaction (5R)-5-hydroxy-L-lysyl-[collagen] + UDP-alpha-D-galactose = (5R)-5-O-(beta-D-galactosyl)-5-hydroxy-L-lysyl-[collagen] + UDP + H(+). In terms of biological role, beta-galactosyltransferase that transfers beta-galactose to hydroxylysine residues of type I collagen. By acting on collagen glycosylation, facilitates the formation of collagen triple helix. Also involved in the biosynthesis of collagen type IV. The chain is Procollagen galactosyltransferase 1 (Colgalt1) from Mus musculus (Mouse).